The chain runs to 173 residues: Shikimate kinase 1 (173 aa).

14 to 19 (GAGKST) lines the ATP pocket. Serine 18 is a Mg(2+) binding site. Residues aspartate 36, arginine 60, and glycine 82 each contribute to the substrate site. ATP is bound at residue arginine 120. Arginine 140 contributes to the substrate binding site. Position 157 (glutamine 157) interacts with ATP.

Belongs to the shikimate kinase family. As to quaternary structure, monomer. Requires Mg(2+) as cofactor.

It localises to the cytoplasm. The enzyme catalyses shikimate + ATP = 3-phosphoshikimate + ADP + H(+). It functions in the pathway metabolic intermediate biosynthesis; chorismate biosynthesis; chorismate from D-erythrose 4-phosphate and phosphoenolpyruvate: step 5/7. Functionally, catalyzes the specific phosphorylation of the 3-hydroxyl group of shikimic acid using ATP as a cosubstrate. This Salmonella typhimurium (strain LT2 / SGSC1412 / ATCC 700720) protein is Shikimate kinase 1.